A 500-amino-acid chain; its full sequence is Centrosomal protein of 57 kDa (500 aa).

The span at 1 to 17 (MAAASVSAASGSHLSNS) shows a compositional bias: low complexity. 2 disordered regions span residues 1–34 (MAAA…HSSS) and 43–62 (KPFL…LAYP). Positions 18–34 (FAEPSRSNGSMVRHSSS) are enriched in polar residues. Phosphoserine is present on residues S53 and S55. A centrosome localization domain (CLD) region spans residues 58–239 (TLAYPESNSR…KAAELQTGLE (182 aa)). 2 coiled-coil regions span residues 63-242 (ESNS…ETNR) and 392-492 (ELKD…NSLQ). The mediates interaction with microtubules stretch occupies residues 277–491 (GAQPHYRLCL…KDMQSIQNSL (215 aa)). The segment covering 434–450 (KKELKATKKTLDEERNS) has biased composition (basic and acidic residues). The segment at 434–472 (KKELKATKKTLDEERNSSSRSGITGTTNKKDFMKLRPGE) is disordered. Polar residues predominate over residues 451 to 460 (SSRSGITGTT). The segment covering 461-471 (NKKDFMKLRPG) has biased composition (basic and acidic residues).

The protein belongs to the translokin family. In terms of assembly, homodimer and homooligomer. Interacts with microtubules. Interacts with FGF2 and RAP80. Does not interact with FGF1 or FGF2 isoform 24 kDa. Ubiquitous.

It is found in the nucleus. Its subcellular location is the cytoplasm. The protein localises to the cytoskeleton. It localises to the microtubule organizing center. The protein resides in the centrosome. Its function is as follows. Centrosomal protein which may be required for microtubule attachment to centrosomes. May act by forming ring-like structures around microtubules. Mediates nuclear translocation and mitogenic activity of the internalized growth factor FGF2, but that of FGF1. The protein is Centrosomal protein of 57 kDa (CEP57) of Homo sapiens (Human).